Here is a 134-residue protein sequence, read N- to C-terminus: MSSEDVKYFTRAEVAKNNTKDKNWFIIHNNVYDVTAFLNEHPGGEEVLIEQAGKDATEHFEDVGHSSDAREMMKQYKVGELVAEERSNVPEKSEPTWNTEQKTEESSMKSWLMPFVLGLVATLIYKFFFGTKSQ.

Positions 6–82 (VKYFTRAEVA…MKQYKVGELV (77 aa)) constitute a Cytochrome b5 heme-binding domain. 2 residues coordinate heme: histidine 41 and histidine 65. A helical transmembrane segment spans residues 111–131 (WLMPFVLGLVATLIYKFFFGT).

Belongs to the cytochrome b5 family.

The protein localises to the endoplasmic reticulum membrane. The protein resides in the microsome membrane. Cytochrome b5 is a membrane bound hemoprotein which function as an electron carrier for several membrane bound oxygenases. This Musca domestica (House fly) protein is Cytochrome b5 (Cyt-b5).